The sequence spans 514 residues: 2,3-bisphosphoglycerate-independent phosphoglycerate mutase (514 aa).

Residues D13 and S63 each coordinate Mn(2+). S63 functions as the Phosphoserine intermediate in the catalytic mechanism. Substrate is bound by residues H124, 154–155 (RD), R186, R192, 258–261 (RADR), and K332. 5 residues coordinate Mn(2+): D399, H403, D440, H441, and H459.

Belongs to the BPG-independent phosphoglycerate mutase family. Monomer. Requires Mn(2+) as cofactor.

The enzyme catalyses (2R)-2-phosphoglycerate = (2R)-3-phosphoglycerate. Its pathway is carbohydrate degradation; glycolysis; pyruvate from D-glyceraldehyde 3-phosphate: step 3/5. In terms of biological role, catalyzes the interconversion of 2-phosphoglycerate and 3-phosphoglycerate. This is 2,3-bisphosphoglycerate-independent phosphoglycerate mutase from Legionella pneumophila subsp. pneumophila (strain Philadelphia 1 / ATCC 33152 / DSM 7513).